We begin with the raw amino-acid sequence, 110 residues long: PCNA-associated factor (110 aa).

Lys15 is covalently cross-linked (Glycyl lysine isopeptide (Lys-Gly) (interchain with G-Cter in ubiquitin)). The short motif at 23 to 34 (RKVLGSSTFVTN) is the D-box element. Lys24 is modified (N6-acetyllysine; alternate). Lys24 participates in a covalent cross-link: Glycyl lysine isopeptide (Lys-Gly) (interchain with G-Cter in ubiquitin); alternate. Ser28 is subject to Phosphoserine. The segment covering 29–39 (STFVTNSSGSS) has biased composition (low complexity). Residues 29–110 (STFVTNSSGS…QPDHRDDENE (82 aa)) form a disordered region. The PIP-box motif lies at 61–71 (QKGIGEFFRLS). Ser71 bears the Phosphoserine mark. The span at 71–80 (SPKDSKKENQ) shows a compositional bias: basic and acidic residues. Residues 77 to 79 (KEN) carry the KEN box motif. Residues 84–96 (EAGSSGLGKAKRK) carry the Initiation motif motif.

Interacts (when monoubiquitinated at Lys-15 and Lys-24) with PCNA. Interacts with isoform 2/p33ING1b of ING1. Interacts with BRCA1. Monoubiquitinated at Lys-15 and Lys-24 during normal S phase, promoting its association with PCNA. Also diubiquitinated at these 2 sites. Following DNA damage, monoubiquitin chains at Lys-15 and Lys-24 are probably extended, leading to disrupt the interaction with PCNA. Polyubiquitinated by the APC/C complex at the mitotic exit, leading to its degradation by the proteasome.

It localises to the nucleus. It is found in the cytoplasm. Its subcellular location is the perinuclear region. Functionally, PCNA-binding protein that acts as a regulator of DNA repair during DNA replication. Following DNA damage, the interaction with PCNA is disrupted, facilitating the interaction between monoubiquitinated PCNA and the translesion DNA synthesis DNA polymerase eta (POLH) at stalled replisomes, facilitating the bypass of replication-fork-blocking lesions. Also acts as a regulator of centrosome number. This Rattus norvegicus (Rat) protein is PCNA-associated factor.